Consider the following 201-residue polypeptide: Oligoribonuclease (201 aa).

The 165-residue stretch at 5–169 (MVWIDCEMTG…ADIRDSITEL (165 aa)) folds into the Exonuclease domain. Residue Tyr126 is part of the active site.

Belongs to the oligoribonuclease family.

Its subcellular location is the cytoplasm. In terms of biological role, 3'-to-5' exoribonuclease specific for small oligoribonucleotides. The sequence is that of Oligoribonuclease from Streptomyces griseus.